Consider the following 1311-residue polypeptide: Clustered mitochondria protein homolog (1311 aa).

The interval 1–46 is disordered; sequence MAATNEVIPTSENPSDVSGSSQKLATEETALANGVDHEEEDSGEAG. A compositionally biased stretch (polar residues) spans 7 to 24; it reads VIPTSENPSDVSGSSQKL. In terms of domain architecture, Clu spans 335–579; it reads DITRTQENYL…RVTPLDITWM (245 aa). Disordered regions lie at residues 629–691 and 915–965; these read ERKR…QERI and QSQT…VNAS. Positions 655–691 are enriched in basic and acidic residues; sequence EASKSDEPTENGELAKKADESDKDAEPSKPAADQERI. Residues 915 to 930 are compositionally biased toward polar residues; the sequence is QSQTEAAAAPPTTNGE. TPR repeat units lie at residues 1034–1067, 1076–1109, and 1118–1151; these read ARVYNSLSMLYYQLDEKEAAMELARKAVIVSERT, LLNYLNLGLIAHASGETKLALTYIKHALDLWKVV, and ITTINNAAVMLQHLKEYHDSRTWFEASLKICEEV. The disordered stretch occupies residues 1236–1311; that stretch reads VSPRVTLGQT…RGGAAAAAGK (76 aa). Residues 1242 to 1253 are compositionally biased toward polar residues; that stretch reads LGQTQLQPQVGQ. Over residues 1259-1279 the composition is skewed to basic and acidic residues; the sequence is AGRDSRSSRGLDSRSIDELLK. Residues 1289–1303 are compositionally biased toward basic residues; sequence KNKKRPGRSNPKRRG.

Belongs to the CLU family. May associate with the eukaryotic translation initiation factor 3 (eIF-3) complex.

The protein resides in the cytoplasm. Its function is as follows. mRNA-binding protein involved in proper cytoplasmic distribution of mitochondria. The sequence is that of Clustered mitochondria protein homolog from Sclerotinia sclerotiorum (strain ATCC 18683 / 1980 / Ss-1) (White mold).